Here is a 370-residue protein sequence, read N- to C-terminus: Ubiquitin carboxyl-terminal hydrolase 12 (370 aa).

Residues 1–4 (MEIL) carry the Required for plasma membrane localization of USP12/WDR20 motif. Positions 39–369 (FGLVNFGNTC…SGYILFYQSR (331 aa)) constitute a USP domain. Cys48 acts as the Nucleophile in catalysis. Basic and acidic residues predominate over residues 146-157 (QEKQNGRLRNGD). Residues 146–168 (QEKQNGRLRNGDVDNEDNNSTPD) are disordered. Zn(2+) contacts are provided by Cys186, Cys189, Cys233, and Cys236. Catalysis depends on His317, which acts as the Proton acceptor.

Belongs to the peptidase C19 family. USP12/USP46 subfamily. As to quaternary structure, interacts with WDR48. Interacts with WDR20; this interaction promotes translocation of the USP12 complex to the plasma membrane. Component of the USP12/WDR20/WDR48 deubiquitinating complex. Component of the USP12/DMWD/WDR48 deubiquitinating complex. Interacts with PHLPP1. Interacts with RBPJ. Interacts with CBP; this interaction blocks the acetyltransferase activity of CREBBP.

The protein localises to the nucleus. It is found in the cytoplasm. It localises to the cell membrane. The catalysed reaction is Thiol-dependent hydrolysis of ester, thioester, amide, peptide and isopeptide bonds formed by the C-terminal Gly of ubiquitin (a 76-residue protein attached to proteins as an intracellular targeting signal).. With respect to regulation, activated by interaction with WDR20; WDR48 and DMWD through different allosteric mechanisms. In terms of biological role, deubiquitinating enzyme that plays various roles in the regulation of the immune response and inflammation. During TCR engagement and activation, translocates into the cytoplasm and deubiquitinates its substrates LAT and TRAT1 and prevents their lysosome-dependent degradation to stabilize the TCR signaling complex at the plasma membrane. Plays an essential role in the selective LPS-induced macrophage response through the activation of NF-kappa-B pathway. In addition, promotes that antiviral immune response through targeting DNA sensor IFI16 to inhibit its proteasome-dependent degradation. Participates in the interferon signaling pathway and antiviral response independently of its deubiquitinase activity by maintaining nuclear phosphorylated STAT1 levels via inhibition of its CREBBP-mediated acetylation and subsequent dephosphorylation. Plays an intrinsic role in promoting the differentiation, activation and proliferation of CD4(+) T-cell by activating the NF-kappa-B signaling pathway through deubiquitinating and stabilizing B-cell lymphoma/leukemia 10/BCL10. In myeloid-derived suppressor cells promotes the activation of the NF-kappa-B via deubiquitination and stabilization of RELA. Regulates the 'Lys-63'-linked polyubiquitin chains of BAX and thereby modulates the mitochondrial apoptotic process. Negative regulator of NOTCH signaling that specifically deubiquitinates non-activated NOTCH receptors to target them for lysosomal degradation; deubiquitination of NOTCH stimulates its transport form late endosomes to lysosomes. Protects neurons against HTT/huntingtin-induced polyglutamine expansion-dependent neurodegeneration through regulation of autophagic flux. This function is independent of deubiquitinase activity or of other components of the USP12-WDR20-WDR48 deubiquitinating complex. In complex with WDR48, acts as a potential tumor suppressor by positively regulating PHLPP1 stability. This Mus musculus (Mouse) protein is Ubiquitin carboxyl-terminal hydrolase 12 (Usp12).